The chain runs to 425 residues: Testicular acid phosphatase (425 aa).

Residues 1–27 (MAEPGSQGHTVGPLLLLLLLLLPRALP) form the signal peptide. At 28 to 392 (EGPLLFVALV…EPASPPATVP (365 aa)) the chain is on the extracellular side. The active-site Nucleophile is H40. 3 cysteine pairs are disulfide-bonded: C158–C378, C213–C311, and C353–C357. D288 (proton donor) is an active-site residue. Residues 393–413 (LLAGAVAVLAVLSLGLGLLAW) traverse the membrane as a helical segment. Over 414-425 (RPRCLRALGGTV) the chain is Cytoplasmic.

This sequence belongs to the histidine acid phosphatase family. In terms of assembly, homodimer. In terms of processing, glycosylated.

It localises to the membrane. The catalysed reaction is a phosphate monoester + H2O = an alcohol + phosphate. May dephosphorylate receptor tyrosine-protein kinase ERBB4 and inhibits its ligand-induced proteolytic cleavage. May play a role in odontogenesis. The polypeptide is Testicular acid phosphatase (Mus musculus (Mouse)).